Consider the following 729-residue polypeptide: Receptor-like protein 2 (729 aa).

Residues 1–44 (MRSKAKGLVRPLITKPVQPLSSHMHLFLLCILFLSALFLTLSEA) form the signal peptide. The interval 45 to 82 (VCNLQDRESLIWFSGNVSSSVSPLNWNLSIDCCSWEGI) is N-cap. Topologically, residues 45–707 (VCNLQDRESL…AKENDELNRT (663 aa)) are extracellular. 2 N-linked (GlcNAc...) asparagine glycosylation sites follow: Asn60 and Asn71. 20 LRR repeats span residues 89 to 113 (DSHVTVISLPSRGLSGTLASSVQNI), 114 to 137 (HRLSRLDLSYNRLSGPLPPGFFST), 139 to 163 (DQLMILNLSYNSFNGELPLEQAFGN), 168 to 193 (FFSIQTLDLSSNLLEGEILRSSVYLQ), 195 to 219 (TINLISFNVSNNSFTGPIPSFMCRS), 220 to 244 (SPQLSKLDFSYNDFSGHISQELGRC), 245 to 268 (LRLTVLQAGFNNLSGVIPSEIYNL), 269 to 292 (SELEQLFLPANQLTGKIDNNITRL), 293 to 316 (RKLTSLALYSNHLEGEIPMDIGNL), 317 to 340 (SSLRSLQLHINNINGTVPLSLANC), 342 to 364 (KLVKLNLRVNQLGGGLTELEFSQ), 365 to 389 (LQSLKVLDLGNNSFTGALPDKIFSC), 391 to 413 (SLTAIRFAGNKLTGEISPQVLEL), 414 to 437 (ESLSFMGLSDNKLTNITGALSILQ), 439 to 464 (CRKLSTLILAKNFYDETVPSKEDFLS), 468 to 492 (FPKLRIFGVGACRLRGEIPAWLINL), 493 to 515 (NKVEVMDLSMNRFVGSIPGWLGT), 516 to 540 (LPDLFYLDLSDNLLTGELPKELFQL), 542 to 560 (ALMSQKITENNYLELPIFL), and 561 to 584 (NPNNVTTNQQYNKLYSFPPTIYIR). N-linked (GlcNAc...) asparagine glycans are attached at residues Asn145 and Asn163. 2 N-linked (GlcNAc...) asparagine glycosylation sites follow: Asn202 and Asn205. N-linked (GlcNAc...) asparagine glycans are attached at residues Asn256, Asn267, Asn288, Asn315, Asn330, and Asn339. N-linked (GlcNAc...) asparagine glycosylation occurs at Asn375. A glycan (N-linked (GlcNAc...) asparagine) is linked at Asn428. 7 N-linked (GlcNAc...) asparagine glycosylation sites follow: Asn564, Asn587, Asn611, Asn622, Asn635, Asn657, and Asn705. LRR repeat units lie at residues 599 to 623 (LKVLHILELLGNNLSGSIPDELSNL), 624 to 647 (TNLERLDLSNNNLSGSIPWSLTNL), and 649 to 672 (FLSYFNVANNSLEGPIPSEGQFDT). Residues 690–707 (LTSCKPTRAKENDELNRT) form a C-cap/acidic domain region. The helical transmembrane segment at 708-728 (FLMGIAIGYFLSFVSILVVRA) threads the bilayer. A topological domain (cytoplasmic) is located at residue Trp729.

Belongs to the RLP family.

Its subcellular location is the cell membrane. Its function is as follows. Involved in the perception of CLV3 and CLV3-like peptides, that act as extracellular signals regulating meristems maintenance. This chain is Receptor-like protein 2, found in Arabidopsis thaliana (Mouse-ear cress).